The chain runs to 120 residues: Ribosome-binding factor A (120 aa).

This sequence belongs to the RbfA family. In terms of assembly, monomer. Binds 30S ribosomal subunits, but not 50S ribosomal subunits or 70S ribosomes.

It is found in the cytoplasm. Its function is as follows. One of several proteins that assist in the late maturation steps of the functional core of the 30S ribosomal subunit. Associates with free 30S ribosomal subunits (but not with 30S subunits that are part of 70S ribosomes or polysomes). Required for efficient processing of 16S rRNA. May interact with the 5'-terminal helix region of 16S rRNA. This is Ribosome-binding factor A from Borreliella burgdorferi (strain ATCC 35210 / DSM 4680 / CIP 102532 / B31) (Borrelia burgdorferi).